Here is a 339-residue protein sequence, read N- to C-terminus: MLELFFEYIFPLIIIALKVVAITIPLILCVAYLTYAERRVIGLMQLRRGPNVVGPFGLLQPIADAVKLLFKEPIIPTNSDKILFILAPMITFILSLIGWAVIPFAKGVVLADINVGVLYILAISSLSVYGIIIAGWASNSKYAFLGAIRSSAQMISYEMSMGLVIITVLLTNGTLNLSGIIEAQRTMPWWIDLMLLPMGVVFFISVLAETNRLPFDLPEAESELVAGYNVEYSSMGFALFFLGEYANMILVSAMTTTFFLGGYLPPFNISWLDCIPGFFWFVFKVGFLLFCFLWIRATLPRYRYDQLMRLGWKVFLPLTLFWVVLVSSVLVYTDNLPSI.

The next 9 helical transmembrane spans lie at 9–29 (IFPL…LILC), 50–70 (PNVV…KLLF), 82–102 (ILFI…WAVI), 115–135 (VGVL…IIAG), 161–181 (MGLV…SGII), 187–207 (MPWW…ISVL), 235–255 (MGFA…SAMT), 275–295 (IPGF…FLWI), and 311–331 (GWKV…SVLV).

It belongs to the complex I subunit 1 family. NDH-1 is composed of 14 different subunits. Subunits NuoA, H, J, K, L, M, N constitute the membrane sector of the complex.

It is found in the cell inner membrane. The catalysed reaction is a quinone + NADH + 5 H(+)(in) = a quinol + NAD(+) + 4 H(+)(out). Its function is as follows. NDH-1 shuttles electrons from NADH, via FMN and iron-sulfur (Fe-S) centers, to quinones in the respiratory chain. The immediate electron acceptor for the enzyme in this species is believed to be ubiquinone. Couples the redox reaction to proton translocation (for every two electrons transferred, four hydrogen ions are translocated across the cytoplasmic membrane), and thus conserves the redox energy in a proton gradient. This subunit may bind ubiquinone. This Rickettsia conorii (strain ATCC VR-613 / Malish 7) protein is NADH-quinone oxidoreductase subunit H.